The chain runs to 236 residues: MGQKINPIGLRLGINRTWDSRWYANTGEYGKLLHEDVKIREFLTEELKQAAISKIVIERPHKKCRVTIHSARPGIIIGKKGADIEKLRKKLSEMTNADTSLNIVEVRKPEVDATLIAQLIAQQLERRVAFRRAMKRAVQSAMRLGAEGIRINCSGRLGGAEIARMEWYREGRVPLHTLRADIDYGTAEAKTAYGICGVKVWVFKGEILEHDPMASERRAVEGDNQGSSSNRRRENA.

The KH type-2 domain occupies I39 to R107. Positions A214 to A236 are disordered.

Belongs to the universal ribosomal protein uS3 family. As to quaternary structure, part of the 30S ribosomal subunit. Forms a tight complex with proteins S10 and S14.

Its function is as follows. Binds the lower part of the 30S subunit head. Binds mRNA in the 70S ribosome, positioning it for translation. The protein is Small ribosomal subunit protein uS3 of Brucella canis (strain ATCC 23365 / NCTC 10854 / RM-666).